The following is a 133-amino-acid chain: Cytochrome c' (133 aa).

The heme c site is built by R12, T72, C122, C125, and H126.

Binds 1 heme c group covalently per subunit.

Functionally, cytochrome c' is the most widely occurring bacterial c-type cytochrome. Cytochromes c' are high-spin proteins and the heme has no sixth ligand. Their exact function is not known. The chain is Cytochrome c' from Rhodocyclus tenuis (Rhodospirillum tenue).